Here is a 154-residue protein sequence, read N- to C-terminus: Prefoldin subunit 2 (154 aa).

Positions 1–18 are enriched in gly residues; it reads MAENGGRAGKSSGSGTGK. 2 disordered regions span residues 1-20 and 124-154; these read MAEN…GKGA and IRLM…VLVS. Residues 124–139 show a composition bias toward basic and acidic residues; sequence IRLMGEDEKPAAKENS. Low complexity predominate over residues 140 to 154; it reads EGAGAKASSAGVLVS.

The protein belongs to the prefoldin subunit beta family. As to quaternary structure, heterohexamer of two PFD-alpha type and four PFD-beta type subunits. Component of the PAQosome complex which is responsible for the biogenesis of several protein complexes and which consists of R2TP complex members RUVBL1, RUVBL2, RPAP3 and PIH1D1, URI complex members PFDN2, PFDN6, PDRG1, UXT and URI1 as well as ASDURF, POLR2E and DNAAF10/WDR92. Interacts with URI1; the interaction is phosphorylation-dependent and occurs in a growth-dependent manner.

Its subcellular location is the nucleus. It is found in the cytoplasm. The protein localises to the mitochondrion. Functionally, binds specifically to cytosolic chaperonin (c-CPN) and transfers target proteins to it. Binds to nascent polypeptide chain and promotes folding in an environment in which there are many competing pathways for nonnative proteins. The polypeptide is Prefoldin subunit 2 (PFDN2) (Bos taurus (Bovine)).